We begin with the raw amino-acid sequence, 441 residues long: ATP-dependent protease ATPase subunit HslU (441 aa).

ATP contacts are provided by residues I17, 60–65, D253, E319, and R391; that span reads GVGKTE.

Belongs to the ClpX chaperone family. HslU subfamily. A double ring-shaped homohexamer of HslV is capped on each side by a ring-shaped HslU homohexamer. The assembly of the HslU/HslV complex is dependent on binding of ATP.

It is found in the cytoplasm. Its function is as follows. ATPase subunit of a proteasome-like degradation complex; this subunit has chaperone activity. The binding of ATP and its subsequent hydrolysis by HslU are essential for unfolding of protein substrates subsequently hydrolyzed by HslV. HslU recognizes the N-terminal part of its protein substrates and unfolds these before they are guided to HslV for hydrolysis. The sequence is that of ATP-dependent protease ATPase subunit HslU from Legionella pneumophila (strain Paris).